The chain runs to 98 residues: Citrate lyase acyl carrier protein (98 aa).

Serine 14 carries the O-(phosphoribosyl dephospho-coenzyme A)serine modification.

Belongs to the CitD family. In terms of assembly, oligomer with a subunit composition of (alpha,beta,gamma)6.

It localises to the cytoplasm. Functionally, covalent carrier of the coenzyme of citrate lyase. This Shigella boydii serotype 18 (strain CDC 3083-94 / BS512) protein is Citrate lyase acyl carrier protein.